A 357-amino-acid chain; its full sequence is DNA replication and repair protein RecF (357 aa).

An ATP-binding site is contributed by 30-37; it reads GANGSGKT.

It belongs to the RecF family.

It localises to the cytoplasm. Its function is as follows. The RecF protein is involved in DNA metabolism; it is required for DNA replication and normal SOS inducibility. RecF binds preferentially to single-stranded, linear DNA. It also seems to bind ATP. This is DNA replication and repair protein RecF from Salmonella heidelberg (strain SL476).